Here is a 223-residue protein sequence, read N- to C-terminus: 2-C-methyl-D-erythritol 4-phosphate cytidylyltransferase (223 aa).

It belongs to the IspD/TarI cytidylyltransferase family. IspD subfamily.

The enzyme catalyses 2-C-methyl-D-erythritol 4-phosphate + CTP + H(+) = 4-CDP-2-C-methyl-D-erythritol + diphosphate. Its pathway is isoprenoid biosynthesis; isopentenyl diphosphate biosynthesis via DXP pathway; isopentenyl diphosphate from 1-deoxy-D-xylulose 5-phosphate: step 2/6. Catalyzes the formation of 4-diphosphocytidyl-2-C-methyl-D-erythritol from CTP and 2-C-methyl-D-erythritol 4-phosphate (MEP). This chain is 2-C-methyl-D-erythritol 4-phosphate cytidylyltransferase, found in Synechococcus sp. (strain WH7803).